The following is a 427-amino-acid chain: Gamma-glutamyl phosphate reductase (427 aa).

The protein belongs to the gamma-glutamyl phosphate reductase family.

The protein localises to the cytoplasm. The catalysed reaction is L-glutamate 5-semialdehyde + phosphate + NADP(+) = L-glutamyl 5-phosphate + NADPH + H(+). The protein operates within amino-acid biosynthesis; L-proline biosynthesis; L-glutamate 5-semialdehyde from L-glutamate: step 2/2. Its function is as follows. Catalyzes the NADPH-dependent reduction of L-glutamate 5-phosphate into L-glutamate 5-semialdehyde and phosphate. The product spontaneously undergoes cyclization to form 1-pyrroline-5-carboxylate. This is Gamma-glutamyl phosphate reductase from Rhizobium johnstonii (strain DSM 114642 / LMG 32736 / 3841) (Rhizobium leguminosarum bv. viciae).